A 925-amino-acid chain; its full sequence is Bifunctional imidazolonepropionase/histidine ammonia-lyase (925 aa).

An imidazolonepropionase region spans residues 1 to 414 (MTKNSSTVFT…IKPHVRMEPF (414 aa)). Fe(3+)-binding residues include H73 and H75. Zn(2+) contacts are provided by H73 and H75. 3 residues coordinate 4-imidazolone-5-propanoate: R82, Y145, and H178. Y145 contributes to the N-formimidoyl-L-glutamate binding site. H243 is a Fe(3+) binding site. Residue H243 coordinates Zn(2+). Q246 contacts 4-imidazolone-5-propanoate. Residue D318 participates in Fe(3+) binding. D318 provides a ligand contact to Zn(2+). 2 residues coordinate N-formimidoyl-L-glutamate: N320 and G322. Residue T323 coordinates 4-imidazolone-5-propanoate. Residues 415-925 (MTIILKPGSV…SAGILPDLEA (511 aa)) form a histidine ammonia-lyase region. Positions 556-558 (ASG) form a cross-link, 5-imidazolinone (Ala-Gly). S557 carries the post-translational modification 2,3-didehydroalanine (Ser).

In the N-terminal section; belongs to the metallo-dependent hydrolases superfamily. HutI family. It in the C-terminal section; belongs to the PAL/histidase family. Zn(2+) serves as cofactor. The cofactor is Fe(3+). Post-translationally, contains an active site 4-methylidene-imidazol-5-one (MIO), which is formed autocatalytically by cyclization and dehydration of residues Ala-Ser-Gly.

It is found in the cytoplasm. It carries out the reaction 4-imidazolone-5-propanoate + H2O = N-formimidoyl-L-glutamate. It catalyses the reaction L-histidine = trans-urocanate + NH4(+). It participates in amino-acid degradation; L-histidine degradation into L-glutamate; N-formimidoyl-L-glutamate from L-histidine: step 1/3. The protein operates within amino-acid degradation; L-histidine degradation into L-glutamate; N-formimidoyl-L-glutamate from L-histidine: step 3/3. In terms of biological role, catalyzes the hydrolytic cleavage of the carbon-nitrogen bond in imidazolone-5-propanoate to yield N-formimidoyl-L-glutamate. It is the third step in the universal histidine degradation pathway. The sequence is that of Bifunctional imidazolonepropionase/histidine ammonia-lyase (hutIH) from Brucella melitensis biotype 1 (strain ATCC 23456 / CCUG 17765 / NCTC 10094 / 16M).